The following is a 614-amino-acid chain: UPF0329 protein ECU03_0090 (614 aa).

Composition is skewed to basic and acidic residues over residues 317-338 (EREEAEKMRGEEERRKKEEESL) and 345-354 (LRMEEKEKSK). The segment at 317 to 420 (EREEAEKMRG…KKSRSKGHRY (104 aa)) is disordered. A compositionally biased stretch (basic residues) spans 355–364 (SRGKKKKGGK). The segment covering 372-381 (AKMEEEKKDS) has biased composition (basic and acidic residues). A compositionally biased stretch (acidic residues) spans 382–394 (EEVEESAEAEVSL). Basic residues predominate over residues 408–420 (SSKKKSRSKGHRY).

Belongs to the UPF0329 family.

The chain is UPF0329 protein ECU03_0090 from Encephalitozoon cuniculi (strain GB-M1) (Microsporidian parasite).